The following is a 229-amino-acid chain: Small ribosomal subunit protein uS3 (229 aa).

The KH type-2 domain occupies 38-106 (IREYIENKLF…KVHINVMEVK (69 aa)). Acidic residues predominate over residues 208–217 (PEVDENEETK). Residues 208–229 (PEVDENEETKEENKEKSEEKSE) are disordered. Basic and acidic residues predominate over residues 218–229 (EENKEKSEEKSE).

It belongs to the universal ribosomal protein uS3 family. Part of the 30S ribosomal subunit. Forms a tight complex with proteins S10 and S14.

Its function is as follows. Binds the lower part of the 30S subunit head. Binds mRNA in the 70S ribosome, positioning it for translation. The polypeptide is Small ribosomal subunit protein uS3 (Natranaerobius thermophilus (strain ATCC BAA-1301 / DSM 18059 / JW/NM-WN-LF)).